Consider the following 712-residue polypeptide: Patatin-like phospholipase domain-containing protein NFIA_019760 (712 aa).

The span at 1–13 (MTSDEKSATRDIY) shows a compositional bias: basic and acidic residues. Positions 1–21 (MTSDEKSATRDIYDPNTLPDY) are disordered. A helical transmembrane segment spans residues 85-105 (WPFLFTVFAWITVLGFAYTLT). The 192-residue stretch at 275–466 (LCLSGGATFA…RTDIPIKALN (192 aa)) folds into the PNPLA domain. Positions 306–310 (GTSGG) match the GXSXG motif. S308 functions as the Nucleophile in the catalytic mechanism. D453 serves as the catalytic Proton acceptor. A disordered region spans residues 628-687 (RRRQDRAEEHADRMVERLDQSFPERQSDYKDESHYTEVSDSLSATSSRPHTPDARRSSMF). Composition is skewed to basic and acidic residues over residues 632–646 (DRAEEHADRMVERLD) and 652–664 (RQSDYKDESHYTE). Residues 665–676 (VSDSLSATSSRP) are compositionally biased toward polar residues. Over residues 677-687 (HTPDARRSSMF) the composition is skewed to basic and acidic residues.

Belongs to the PLPL family.

It is found in the membrane. Its function is as follows. Probable lipid hydrolase. The chain is Patatin-like phospholipase domain-containing protein NFIA_019760 from Neosartorya fischeri (strain ATCC 1020 / DSM 3700 / CBS 544.65 / FGSC A1164 / JCM 1740 / NRRL 181 / WB 181) (Aspergillus fischerianus).